Reading from the N-terminus, the 404-residue chain is Cysteine desulfurase IscS (404 aa).

Pyridoxal 5'-phosphate-binding positions include 75-76 (AT), N155, Q183, and 203-205 (SSH). N6-(pyridoxal phosphate)lysine is present on K206. Residue T243 participates in pyridoxal 5'-phosphate binding. C328 acts as the Cysteine persulfide intermediate in catalysis. C328 serves as a coordination point for [2Fe-2S] cluster.

Belongs to the class-V pyridoxal-phosphate-dependent aminotransferase family. NifS/IscS subfamily. Homodimer. Forms a heterotetramer with IscU, interacts with other sulfur acceptors. The cofactor is pyridoxal 5'-phosphate.

Its subcellular location is the cytoplasm. The catalysed reaction is (sulfur carrier)-H + L-cysteine = (sulfur carrier)-SH + L-alanine. The protein operates within cofactor biosynthesis; iron-sulfur cluster biosynthesis. Master enzyme that delivers sulfur to a number of partners involved in Fe-S cluster assembly, tRNA modification or cofactor biosynthesis. Catalyzes the removal of elemental sulfur atoms from cysteine to produce alanine. Functions as a sulfur delivery protein for Fe-S cluster synthesis onto IscU, an Fe-S scaffold assembly protein, as well as other S acceptor proteins. The sequence is that of Cysteine desulfurase IscS from Pasteurella multocida (strain Pm70).